The following is a 272-amino-acid chain: Shikimate dehydrogenase (NADP(+)) (272 aa).

Shikimate is bound by residues 14-16 (SKS) and T61. K65 (proton acceptor) is an active-site residue. E77 serves as a coordination point for NADP(+). Residues N86 and D102 each contribute to the shikimate site. Residues 126–130 (GAGGA), 149–154 (NRTVSR), and M213 each bind NADP(+). Y215 serves as a coordination point for shikimate. G237 serves as a coordination point for NADP(+).

The protein belongs to the shikimate dehydrogenase family. In terms of assembly, homodimer.

The catalysed reaction is shikimate + NADP(+) = 3-dehydroshikimate + NADPH + H(+). The protein operates within metabolic intermediate biosynthesis; chorismate biosynthesis; chorismate from D-erythrose 4-phosphate and phosphoenolpyruvate: step 4/7. In terms of biological role, involved in the biosynthesis of the chorismate, which leads to the biosynthesis of aromatic amino acids. Catalyzes the reversible NADPH linked reduction of 3-dehydroshikimate (DHSA) to yield shikimate (SA). The sequence is that of Shikimate dehydrogenase (NADP(+)) from Escherichia coli O6:K15:H31 (strain 536 / UPEC).